The sequence spans 480 residues: Chromosomal replication initiator protein DnaA (480 aa).

A domain I, interacts with DnaA modulators region spans residues 1 to 71; that stretch reads MNLTKVWNTT…REQLGSVVGF (71 aa). The domain II stretch occupies residues 71-139; that stretch reads FPVDVRIVLA…LELHRAVRSS (69 aa). The interval 91–115 is disordered; sequence SINGRHAARDTRKSDHHAPLSGGYG. Over residues 97 to 108 the composition is skewed to basic and acidic residues; that stretch reads AARDTRKSDHHA. Residues 140 to 356 are domain III, AAA+ region; it reads MLNPRYTFDR…GCLNRVTAYA (217 aa). ATP is bound by residues Gly184, Gly186, Lys187, and Thr188. Positions 357 to 480 are domain IV, binds dsDNA; the sequence is QMYNIPVTIE…IRERLMNSAV (124 aa).

The protein belongs to the DnaA family. In terms of assembly, oligomerizes as a right-handed, spiral filament on DNA at oriC.

The protein localises to the cytoplasm. Plays an essential role in the initiation and regulation of chromosomal replication. ATP-DnaA binds to the origin of replication (oriC) to initiate formation of the DNA replication initiation complex once per cell cycle. Binds the DnaA box (a 9 base pair repeat at the origin) and separates the double-stranded (ds)DNA. Forms a right-handed helical filament on oriC DNA; dsDNA binds to the exterior of the filament while single-stranded (ss)DNA is stabiized in the filament's interior. The ATP-DnaA-oriC complex binds and stabilizes one strand of the AT-rich DNA unwinding element (DUE), permitting loading of DNA polymerase. After initiation quickly degrades to an ADP-DnaA complex that is not apt for DNA replication. Binds acidic phospholipids. This chain is Chromosomal replication initiator protein DnaA, found in Roseiflexus castenholzii (strain DSM 13941 / HLO8).